We begin with the raw amino-acid sequence, 368 residues long: Cyanide hydratase (368 aa).

Residues 6–285 enclose the CN hydrolase domain; that stretch reads YKAAVVTSEP…DGLMYVDIDL (280 aa). Glu-46 acts as the Proton acceptor in catalysis. Residue Lys-128 is part of the active site. Residue Cys-163 is the Nucleophile of the active site. A disordered region spans residues 341 to 368; that stretch reads LDRPLEEEDYRQGTDAGETEKASSNGHA.

It belongs to the carbon-nitrogen hydrolase superfamily. Nitrilase family. Oligomer of dimers, forming left-handed helical fibers.

The catalysed reaction is formamide = hydrogen cyanide + H2O. In terms of biological role, catalyzes the hydration of cyanide to formamide. Degradation of cyanide may be important for plant pathogenic fungi in infection of cyanogenic plants. The polypeptide is Cyanide hydratase (Microdochium sorghi (Zonate leaf spot disease fungus)).